Here is a 635-residue protein sequence, read N- to C-terminus: Moesin/ezrin/radixin homolog 2 (635 aa).

Residues 12-305 (LSVRVSTFDS…GNHDLYMRRR (294 aa)) form the FERM domain.

In terms of assembly, interacts with Moe and arm at the adherens junction. Forms a complex with Kibra and Ex. Interacts (via FERM domain) with Sav (via FBM motif). Interacts with Schip1. Expressed predominantly in the germline. Expressed in the developing oocyte from stage 6 to the end of oogenesis and in the apical ends of follical cells from stage 10. Ubiquitous expression throughout embryogenesis with enhanced expression in mesoderm of early embryos and midgut of late embryos. In embryonic CNS, expression is seen in neuropil and developing brain and is enhanced in neuronal cell bodies. In embryonic PNS, expression is seen within the cell body. In third instar larvae, expression is uniform in the eye imaginal disk and is enhanced at the morphogenetic furrow. In pupal eyes, expression is seen in the cytoplasm of secondary and tertiary pigment cells, bristle precursor cells and rhabdomeres.

The protein resides in the cell junction. The protein localises to the adherens junction. Its subcellular location is the cell membrane. It is found in the cytoplasm. It localises to the cytoskeleton. The protein resides in the apical cell membrane. The protein localises to the cell projection. Its subcellular location is the rhabdomere. Its function is as follows. Regulator of the Hippo/SWH (Sav/Wts/Hpo) signaling pathway, a signaling pathway that plays a pivotal role in organ size control and tumor suppression by restricting proliferation and promoting apoptosis. The core of this pathway is composed of a kinase cascade wherein Hippo (Hpo), in complex with its regulatory protein Salvador (Sav), phosphorylates and activates Warts (Wts) in complex with its regulatory protein Mats, which in turn phosphorylates and inactivates the Yorkie (Yki) oncoprotein. Mer acts synergistically along with Ex and Kibra to regulate the Hippo signaling pathway. This chain is Moesin/ezrin/radixin homolog 2 (Mer), found in Drosophila melanogaster (Fruit fly).